We begin with the raw amino-acid sequence, 261 residues long: Indole-3-glycerol phosphate synthase (261 aa).

It belongs to the TrpC family.

It catalyses the reaction 1-(2-carboxyphenylamino)-1-deoxy-D-ribulose 5-phosphate + H(+) = (1S,2R)-1-C-(indol-3-yl)glycerol 3-phosphate + CO2 + H2O. The protein operates within amino-acid biosynthesis; L-tryptophan biosynthesis; L-tryptophan from chorismate: step 4/5. The sequence is that of Indole-3-glycerol phosphate synthase from Oceanobacillus iheyensis (strain DSM 14371 / CIP 107618 / JCM 11309 / KCTC 3954 / HTE831).